The sequence spans 201 residues: NADH-quinone oxidoreductase subunit C (201 aa).

It belongs to the complex I 30 kDa subunit family. In terms of assembly, NDH-1 is composed of 14 different subunits. Subunits NuoB, C, D, E, F, and G constitute the peripheral sector of the complex.

The protein resides in the cell inner membrane. It carries out the reaction a quinone + NADH + 5 H(+)(in) = a quinol + NAD(+) + 4 H(+)(out). In terms of biological role, NDH-1 shuttles electrons from NADH, via FMN and iron-sulfur (Fe-S) centers, to quinones in the respiratory chain. The immediate electron acceptor for the enzyme in this species is believed to be ubiquinone. Couples the redox reaction to proton translocation (for every two electrons transferred, four hydrogen ions are translocated across the cytoplasmic membrane), and thus conserves the redox energy in a proton gradient. The polypeptide is NADH-quinone oxidoreductase subunit C (Ruegeria sp. (strain TM1040) (Silicibacter sp.)).